The sequence spans 185 residues: Large ribosomal subunit protein uL5 (185 aa).

Belongs to the universal ribosomal protein uL5 family. As to quaternary structure, part of the 50S ribosomal subunit; part of the 5S rRNA/L5/L18/L25 subcomplex. Contacts the 5S rRNA and the P site tRNA. Forms a bridge to the 30S subunit in the 70S ribosome.

This is one of the proteins that bind and probably mediate the attachment of the 5S RNA into the large ribosomal subunit, where it forms part of the central protuberance. In the 70S ribosome it contacts protein S13 of the 30S subunit (bridge B1b), connecting the 2 subunits; this bridge is implicated in subunit movement. Contacts the P site tRNA; the 5S rRNA and some of its associated proteins might help stabilize positioning of ribosome-bound tRNAs. In Parvibaculum lavamentivorans (strain DS-1 / DSM 13023 / NCIMB 13966), this protein is Large ribosomal subunit protein uL5.